The sequence spans 100 residues: uncharacterized protein (100 aa).

Positions 68–91 are enriched in basic and acidic residues; that stretch reads EQYASGAGEKRKEQSSGNSRRKDP. The disordered stretch occupies residues 68-100; it reads EQYASGAGEKRKEQSSGNSRRKDPSLYNWSDVK.

Belongs to the chlamydial CPn_0121/CT_031/TC_0300 family.

This is an uncharacterized protein from Chlamydia muridarum (strain MoPn / Nigg).